A 444-amino-acid chain; its full sequence is Docking protein 3 (444 aa).

A PH domain is found at 7 to 123 (PVKDGLLYQQ…WMDPICQLAF (117 aa)). Positions 47–66 (DVRDGGLGPGGDRPAGPGRR) are disordered. S138 is modified (phosphoserine). The 105-residue stretch at 157-261 (EVAEFPVVVQ…ARQRERLPEL (105 aa)) folds into the IRS-type PTB domain. S274, S308, and S314 each carry phosphoserine. Y325 is subject to Phosphotyrosine. The tract at residues 354-390 (GLSNGGPEAQEGPPGGRSPLGSPIYHNSEELSWPGSA) is disordered. Low complexity predominate over residues 358 to 376 (GGPEAQEGPPGGRSPLGSP). S371 is subject to Phosphoserine.

This sequence belongs to the DOK family. Type A subfamily. In terms of assembly, on tyrosine phosphorylation, interacts with CSK and INPP5D/SHIP1 via their SH2 domains. Binds ABL1 through the PTB domain and in a kinase-dependent manner. Does not interact with RasGAP. In terms of processing, constitutively tyrosine-phosphorylated. On IL2 stimulation, phosphorylated on C-terminal tyrosine residues possibly by Src kinases. Can also be phosphorylated by ABL1 kinase.

It localises to the cytoplasm. The protein localises to the cell membrane. Its function is as follows. DOK proteins are enzymatically inert adaptor or scaffolding proteins. They provide a docking platform for the assembly of multimolecular signaling complexes. DOK3 is a negative regulator of JNK signaling in B-cells through interaction with INPP5D/SHIP1. May modulate ABL1 function. This Rattus norvegicus (Rat) protein is Docking protein 3 (Dok3).